The sequence spans 252 residues: Trans-aconitate 2-methyltransferase (252 aa).

This sequence belongs to the methyltransferase superfamily. Tam family.

It is found in the cytoplasm. It carries out the reaction trans-aconitate + S-adenosyl-L-methionine = (E)-3-(methoxycarbonyl)pent-2-enedioate + S-adenosyl-L-homocysteine. Its function is as follows. Catalyzes the S-adenosylmethionine monomethyl esterification of trans-aconitate. This chain is Trans-aconitate 2-methyltransferase, found in Escherichia fergusonii (strain ATCC 35469 / DSM 13698 / CCUG 18766 / IAM 14443 / JCM 21226 / LMG 7866 / NBRC 102419 / NCTC 12128 / CDC 0568-73).